A 156-amino-acid polypeptide reads, in one-letter code: ATP synthase subunit b (156 aa).

Residues 5–27 (ITLIGQMITFAIFIGFTMKFVWP) traverse the membrane as a helical segment.

Belongs to the ATPase B chain family. F-type ATPases have 2 components, F(1) - the catalytic core - and F(0) - the membrane proton channel. F(1) has five subunits: alpha(3), beta(3), gamma(1), delta(1), epsilon(1). F(0) has three main subunits: a(1), b(2) and c(10-14). The alpha and beta chains form an alternating ring which encloses part of the gamma chain. F(1) is attached to F(0) by a central stalk formed by the gamma and epsilon chains, while a peripheral stalk is formed by the delta and b chains.

It is found in the cell inner membrane. Functionally, f(1)F(0) ATP synthase produces ATP from ADP in the presence of a proton or sodium gradient. F-type ATPases consist of two structural domains, F(1) containing the extramembraneous catalytic core and F(0) containing the membrane proton channel, linked together by a central stalk and a peripheral stalk. During catalysis, ATP synthesis in the catalytic domain of F(1) is coupled via a rotary mechanism of the central stalk subunits to proton translocation. Component of the F(0) channel, it forms part of the peripheral stalk, linking F(1) to F(0). The protein is ATP synthase subunit b of Francisella tularensis subsp. holarctica (strain OSU18).